Here is a 667-residue protein sequence, read N- to C-terminus: Acetoacetyl-CoA synthetase (667 aa).

It belongs to the ATP-dependent AMP-binding enzyme family.

It is found in the cytoplasm. The protein localises to the cytosol. It catalyses the reaction acetoacetate + ATP + CoA = acetoacetyl-CoA + AMP + diphosphate. In terms of biological role, converts acetoacetate to acetoacetyl-CoA in the cytosol. Ketone body-utilizing enzyme, responsible for the synthesis of cholesterol and fatty acids. This Gallus gallus (Chicken) protein is Acetoacetyl-CoA synthetase (AACS).